A 934-amino-acid chain; its full sequence is Serine/threonine-protein kinase PknD (934 aa).

The 293-residue stretch at 4–296 (YELIRLIGKG…ELRQALQPYL (293 aa)) folds into the Protein kinase domain. Residues 10–18 (IGKGGMGEV) and Lys-33 contribute to the ATP site. Residue Asp-138 is the Proton acceptor of the active site.

The protein belongs to the protein kinase superfamily. Ser/Thr protein kinase family. In terms of assembly, interacts with Pkn1. Autophosphorylated on serine and threonine residues. Present in elementary bodies 40 hours post-infection as 2 bands of approximately 55 to 60 and 45 to 50 kDa, which may be due to differential phosphorylation as well as degradation; an enzymatically active full-length protein can also be detected.

The enzyme catalyses L-seryl-[protein] + ATP = O-phospho-L-seryl-[protein] + ADP + H(+). It carries out the reaction L-threonyl-[protein] + ATP = O-phospho-L-threonyl-[protein] + ADP + H(+). Functionally, together with the serine/threonine kinase Pkn1, may play a role in the specific interactions with host proteins during intracellular growth. Autophosphorylates and also phosphorylates Pkn1. This Chlamydia trachomatis serovar L2 (strain ATCC VR-902B / DSM 19102 / 434/Bu) protein is Serine/threonine-protein kinase PknD.